Here is a 180-residue protein sequence, read N- to C-terminus: Bifunctional protein PyrR (180 aa).

Positions 101 to 113 (VILVDDVLYTGRT) match the PRPP-binding motif.

It belongs to the purine/pyrimidine phosphoribosyltransferase family. PyrR subfamily. In terms of assembly, homodimer and homohexamer; in equilibrium.

The catalysed reaction is UMP + diphosphate = 5-phospho-alpha-D-ribose 1-diphosphate + uracil. Functionally, regulates transcriptional attenuation of the pyrimidine nucleotide (pyr) operon by binding in a uridine-dependent manner to specific sites on pyr mRNA. This disrupts an antiterminator hairpin in the RNA and favors formation of a downstream transcription terminator, leading to a reduced expression of downstream genes. Its function is as follows. Also displays a weak uracil phosphoribosyltransferase activity which is not physiologically significant. The sequence is that of Bifunctional protein PyrR from Bacillus cereus (strain ATCC 14579 / DSM 31 / CCUG 7414 / JCM 2152 / NBRC 15305 / NCIMB 9373 / NCTC 2599 / NRRL B-3711).